A 466-amino-acid polypeptide reads, in one-letter code: Ribulose bisphosphate carboxylase large chain (466 aa).

The residue at position 5 (Lys-5) is an N6,N6,N6-trimethyllysine. 2 residues coordinate substrate: Asn-114 and Thr-164. Lys-166 functions as the Proton acceptor in the catalytic mechanism. Substrate is bound at residue Lys-168. Positions 192, 194, and 195 each coordinate Mg(2+). Lys-192 carries the post-translational modification N6-carboxylysine. His-285 (proton acceptor) is an active-site residue. 3 residues coordinate substrate: Arg-286, His-318, and Ser-370.

It belongs to the RuBisCO large chain family. Type I subfamily. As to quaternary structure, heterohexadecamer of 8 large chains and 8 small chains; disulfide-linked. The disulfide link is formed within the large subunit homodimers. Mg(2+) is required as a cofactor. The disulfide bond which can form in the large chain dimeric partners within the hexadecamer appears to be associated with oxidative stress and protein turnover.

The protein resides in the plastid. It localises to the chloroplast. The enzyme catalyses 2 (2R)-3-phosphoglycerate + 2 H(+) = D-ribulose 1,5-bisphosphate + CO2 + H2O. The catalysed reaction is D-ribulose 1,5-bisphosphate + O2 = 2-phosphoglycolate + (2R)-3-phosphoglycerate + 2 H(+). RuBisCO catalyzes two reactions: the carboxylation of D-ribulose 1,5-bisphosphate, the primary event in carbon dioxide fixation, as well as the oxidative fragmentation of the pentose substrate in the photorespiration process. Both reactions occur simultaneously and in competition at the same active site. The protein is Ribulose bisphosphate carboxylase large chain of Adoxa moschatellina (Moschatel).